The following is a 395-amino-acid chain: MAETFLFTSESVNEGHPDKLCDQISDAVLDACLAQDPDSKVACETCTKTNMVMVFGEITTKADVDYEKIVRDTCRNIGFTSADVGLDADNCKVLVNIEQQSPDIAQGVHGHFSKRPEEIGAGDQGHMFGYATDETPELMPLSHVLATKLGARLTEVRKNGTCAWLRPDGKTQVTVEYYNENGAMVPVRVHTVLISTQHDETVTNDEIAADLKEHVIKPVIPEKYLDEKTIFHLNPSGRFVIGGPHGDAGLTGRKIIIDTYGGWGAHGGGAFSGKDPTKVDRSGAYIVRQAAKSIVASGLARRCIVQVSYAIGVPEPLSVFVDTYGTGKIPDKEILQIVKESFDFRPGMISINLDLKRGGNSRFLKTAAYGHFGRDDPDFTWEVVKPLKWDNKVQA.

Position 10 (glutamate 10) interacts with Mg(2+). Histidine 16 provides a ligand contact to ATP. Residue glutamate 44 participates in K(+) binding. 2 residues coordinate L-methionine: glutamate 57 and glutamine 100. ATP contacts are provided by residues 168–170 (DGK), 236–239 (SGRF), aspartate 247, 253–254 (RK), alanine 270, lysine 274, and lysine 278. Aspartate 247 contacts L-methionine. Lysine 278 is a binding site for L-methionine.

The protein belongs to the AdoMet synthase family. Homotetramer. It depends on Mn(2+) as a cofactor. Requires Mg(2+) as cofactor. Co(2+) is required as a cofactor. The cofactor is K(+).

It localises to the cytoplasm. It carries out the reaction L-methionine + ATP + H2O = S-adenosyl-L-methionine + phosphate + diphosphate. It functions in the pathway amino-acid biosynthesis; S-adenosyl-L-methionine biosynthesis; S-adenosyl-L-methionine from L-methionine: step 1/1. Functionally, catalyzes the formation of S-adenosylmethionine from methionine and ATP. The reaction comprises two steps that are both catalyzed by the same enzyme: formation of S-adenosylmethionine (AdoMet) and triphosphate, and subsequent hydrolysis of the triphosphate. The chain is S-adenosylmethionine synthase 3 (METK3) from Populus trichocarpa (Western balsam poplar).